The following is a 163-amino-acid chain: MNDLLPDLCDHYEQDVRWLPLVLNDYGGKKIFYGEVVTLRCFEDNSLVRDIVSQDGTGKVLFIDGHASYNGALLGDQLALLAVKNGWQGIVINGTARDVGTLATLDLGVKALGTCPYKTVKRQTGDMNVTMTVAHTMIYPGDYLYADLNGILLSKQSLDLSVL.

Residues 75–78 (GDQL) and arginine 97 each bind substrate. A divalent metal cation is bound at residue aspartate 98.

Belongs to the class II aldolase/RraA-like family. Homotrimer. Requires a divalent metal cation as cofactor.

It carries out the reaction 4-hydroxy-4-methyl-2-oxoglutarate = 2 pyruvate. It catalyses the reaction oxaloacetate + H(+) = pyruvate + CO2. Functionally, catalyzes the aldol cleavage of 4-hydroxy-4-methyl-2-oxoglutarate (HMG) into 2 molecules of pyruvate. Also contains a secondary oxaloacetate (OAA) decarboxylase activity due to the common pyruvate enolate transition state formed following C-C bond cleavage in the retro-aldol and decarboxylation reactions. The sequence is that of Putative 4-hydroxy-4-methyl-2-oxoglutarate aldolase from Photobacterium profundum (strain SS9).